The sequence spans 309 residues: Ribonuclease H2 subunit B (309 aa).

Residue alanine 2 is modified to N-acetylalanine. Lysine 295 is modified (N6-acetyllysine). Serine 296 carries the post-translational modification Phosphoserine.

This sequence belongs to the RNase H2 subunit B family. In terms of assembly, the RNase H2 complex is a heterotrimer composed of the catalytic subunit RNASEH2A and the non-catalytic subunits RNASEH2B and RNASEH2C.

Its subcellular location is the nucleus. In terms of biological role, non catalytic subunit of RNase H2, an endonuclease that specifically degrades the RNA of RNA:DNA hybrids. Participates in DNA replication, possibly by mediating the removal of lagging-strand Okazaki fragment RNA primers during DNA replication. Mediates the excision of single ribonucleotides from DNA:RNA duplexes. In Bos taurus (Bovine), this protein is Ribonuclease H2 subunit B (RNASEH2B).